Here is a 413-residue protein sequence, read N- to C-terminus: N-acylneuraminate cytidylyltransferase (413 aa).

The protein belongs to the CMP-NeuNAc synthase family. The cofactor is Mg(2+). Mn(2+) serves as cofactor.

It is found in the cytoplasm. It catalyses the reaction an N-acylneuraminate + CTP = a CMP-N-acyl-beta-neuraminate + diphosphate. Functionally, catalyzes the formation of CMP-N-acetylneuraminic acid (CMP-NeuNAc), which is essential for the formation of the capsule. In Streptococcus agalactiae serotype Ia (strain ATCC 27591 / A909 / CDC SS700), this protein is N-acylneuraminate cytidylyltransferase (neuA).